The primary structure comprises 212 residues: Leucine efflux protein (212 aa).

6 helical membrane passes run 12 to 32, 49 to 69, 71 to 91, 122 to 142, 153 to 173, and 188 to 208; these read TYLV…LFVL, GVFI…ATLI, TTPI…LYLG, ILSL…VQFI, FFIL…FLII, and LAKV…ARLA.

It belongs to the Rht family.

The protein localises to the cell inner membrane. The enzyme catalyses L-leucine(in) + H(+)(out) = L-leucine(out) + H(+)(in). Exporter of leucine. The sequence is that of Leucine efflux protein (leuE) from Escherichia coli O6:K15:H31 (strain 536 / UPEC).